A 265-amino-acid chain; its full sequence is 5'-nucleotidase SurE (265 aa).

A divalent metal cation contacts are provided by Asp-8, Asp-9, Ser-39, and Asn-96.

This sequence belongs to the SurE nucleotidase family. It depends on a divalent metal cation as a cofactor.

The protein localises to the cytoplasm. The catalysed reaction is a ribonucleoside 5'-phosphate + H2O = a ribonucleoside + phosphate. In terms of biological role, nucleotidase that shows phosphatase activity on nucleoside 5'-monophosphates. This Dehalococcoides mccartyi (strain ATCC BAA-2100 / JCM 16839 / KCTC 5957 / BAV1) protein is 5'-nucleotidase SurE.